The sequence spans 168 residues: Cyclin-dependent kinase 4 inhibitor C (168 aa).

5 ANK repeats span residues Pro4 to Ala33, Phe37 to Leu65, Thr69 to Ile98, Glu102 to His132, and Lys136 to Thr165.

This sequence belongs to the CDKN2 cyclin-dependent kinase inhibitor family. As to quaternary structure, heterodimer of p18 with CDK6.

Interacts strongly with CDK6, weakly with CDK4. Inhibits cell growth and proliferation with a correlated dependence on endogenous retinoblastoma protein RB. The polypeptide is Cyclin-dependent kinase 4 inhibitor C (Cdkn2c) (Mus musculus (Mouse)).